A 365-amino-acid chain; its full sequence is MNIMDFNVKKLAADAGTFLSRAVQFTEEKLGQAEKTELDAHLENLLSKAECTKIWTEKIMKQTEVLLQPNPNARIEEFVYEKLDRKAPSRINNPELLGQYMIDAGTEFGPGTAYGNALIKCGETQKRIGTADRELIQTSALNFLTPLRNFIEGDYKTIAKERKLLQNKRLDLDAAKTRLKKAKAAETKSSSEQELRITQSEFDRQAEITRLLLEGISSTHAHHLRCLNDFVEAQMTYYAQCYQYMLDLQKQLGSFPSNYLSNNNQTSGTPVPYALSNAIGPSAQASTGSLVITCPSNLNDLKESSNNRKARVLYDYDAANSTELSLLADEVITVFSVVGMDSDWLMGERGNQKGKVPITYLELLN.

At Met1 the chain carries N-acetylmethionine. The segment at 1–30 is membrane-binding amphipathic helix; it reads MNIMDFNVKKLAADAGTFLSRAVQFTEEKL. The tract at residues 1-37 is required for membrane binding; that stretch reads MNIMDFNVKKLAADAGTFLSRAVQFTEEKLGQAEKTE. Residues 27 to 261 enclose the BAR domain; it reads EEKLGQAEKT…LGSFPSNYLS (235 aa). Residue Thr145 is modified to Phosphothreonine; by CDK5. The stretch at 155–186 forms a coiled coil; the sequence is YKTIAKERKLLQNKRLDLDAAKTRLKKAKAAE. In terms of domain architecture, SH3 spans 305–365; sequence SNNRKARVLY…VPITYLELLN (61 aa).

Belongs to the endophilin family. In terms of assembly, homodimer, and heterodimer with SH3GLB2. Binds BAX; induction of apoptosis augments BAX binding. Binds DNM1, HTT, AMPH, BIN1 and ARFGAP1. Interacts with UVRAG; UVRAG bridges the interaction to BECN1 indicative for an association with the PI3K complex II (PI3KC3-C2). Isoform 3 interacts with PPP1CC; this interaction leads to the inhibition of phosphatase activity. Phosphorylated at Thr-145 by CDK5; this phosphorylation is required for autophagy induction in starved neurons and facilitates homodimerization. As to expression, isoform 1 is widely expressed. Isoform 2 is brain-specific. Isoform 3 is predominantly expressed in testis, but it is also detected in liver and, at much lower levels, in skin, stomach and ovary.

It localises to the cytoplasm. The protein localises to the golgi apparatus membrane. It is found in the mitochondrion outer membrane. The protein resides in the cytoplasmic vesicle. Its subcellular location is the autophagosome membrane. It localises to the midbody. In terms of biological role, may be required for normal outer mitochondrial membrane dynamics. Required for coatomer-mediated retrograde transport in certain cells. May recruit other proteins to membranes with high curvature. May promote membrane fusion. Involved in activation of caspase-dependent apoptosis by promoting BAX/BAK1 activation. Isoform 1 acts proapoptotic in fibroblasts. Involved in caspase-independent apoptosis during nutrition starvation and involved in the regulation of autophagy. Activates lipid kinase activity of PIK3C3 during autophagy probably by associating with the PI3K complex II (PI3KC3-C2). Associated with PI3KC3-C2 during autophagy may regulate the trafficking of ATG9A from the Golgi complex to the peripheral cytoplasm for the formation of autophagosomes by inducing Golgi membrane tubulation and fragmentation. Involved in regulation of degradative endocytic trafficking and cytokinesis, probably in the context of PI3KC3-C2. Isoform 2 acts antiapoptotic in neuronal cells; involved in maintenance of mitochondrial morphology and promotes neuronal viability. This is Endophilin-B1 (Sh3glb1) from Mus musculus (Mouse).